The primary structure comprises 358 residues: Nitric oxide synthase oxygenase (358 aa).

Cysteine 62 lines the heme pocket.

The protein belongs to the NOS family. Bacterial NOS oxygenase subfamily. Homodimer. Heme serves as cofactor. Requires (6S)-5,6,7,8-tetrahydrofolate as cofactor.

It carries out the reaction 3 reduced [flavodoxin] + 2 L-arginine + 4 O2 = 3 oxidized [flavodoxin] + 2 L-citrulline + 2 nitric oxide + 4 H2O + 5 H(+). Catalyzes the production of nitric oxide. The protein is Nitric oxide synthase oxygenase (nos) of Staphylococcus aureus (strain COL).